The following is a 503-amino-acid chain: Lanosterol 14-alpha demethylase (503 aa).

A helical membrane pass occupies residues 24-44; that stretch reads GNLLSTLLIACAFTLSLVYLF. Residue C449 coordinates heme.

It belongs to the cytochrome P450 family. Heme is required as a cofactor. Post-translationally, ubiquitinated by MARCHF6, leading to proteasomal degradation.

It localises to the endoplasmic reticulum membrane. Its subcellular location is the microsome membrane. It catalyses the reaction a 14alpha-methyl steroid + 3 reduced [NADPH--hemoprotein reductase] + 3 O2 = a Delta(14) steroid + formate + 3 oxidized [NADPH--hemoprotein reductase] + 4 H2O + 4 H(+). It carries out the reaction lanosterol + 3 reduced [NADPH--hemoprotein reductase] + 3 O2 = 4,4-dimethyl-5alpha-cholesta-8,14,24-trien-3beta-ol + formate + 3 oxidized [NADPH--hemoprotein reductase] + 4 H2O + 4 H(+). The enzyme catalyses 24,25-dihydrolanosterol + 3 reduced [NADPH--hemoprotein reductase] + 3 O2 = 4,4-dimethyl-8,14-cholestadien-3beta-ol + formate + 3 oxidized [NADPH--hemoprotein reductase] + 4 H2O + 4 H(+). The catalysed reaction is a 14alpha-methyl steroid + reduced [NADPH--hemoprotein reductase] + O2 = a 14alpha-hydroxymethyl steroid + oxidized [NADPH--hemoprotein reductase] + H2O + H(+). It catalyses the reaction a 14alpha-hydroxymethyl steroid + reduced [NADPH--hemoprotein reductase] + O2 = a 14alpha-formyl steroid + oxidized [NADPH--hemoprotein reductase] + 2 H2O + H(+). It carries out the reaction a 14alpha-formyl steroid + reduced [NADPH--hemoprotein reductase] + O2 = a Delta(14) steroid + formate + oxidized [NADPH--hemoprotein reductase] + H2O + 2 H(+). The enzyme catalyses lanosterol + reduced [NADPH--hemoprotein reductase] + O2 = 32-hydroxylanosterol + oxidized [NADPH--hemoprotein reductase] + H2O + H(+). The catalysed reaction is 32-hydroxylanosterol + reduced [NADPH--hemoprotein reductase] + O2 = 32-oxolanosterol + oxidized [NADPH--hemoprotein reductase] + 2 H2O + H(+). It catalyses the reaction 32-oxolanosterol + reduced [NADPH--hemoprotein reductase] + O2 = 4,4-dimethyl-5alpha-cholesta-8,14,24-trien-3beta-ol + formate + oxidized [NADPH--hemoprotein reductase] + H2O + 2 H(+). It carries out the reaction 24,25-dihydrolanosterol + reduced [NADPH--hemoprotein reductase] + O2 = 32-hydroxy-24,25-dihydrolanosterol + oxidized [NADPH--hemoprotein reductase] + H2O + H(+). The enzyme catalyses 32-hydroxy-24,25-dihydrolanosterol + reduced [NADPH--hemoprotein reductase] + O2 = 32-oxo-24,25-dihydrolanosterol + oxidized [NADPH--hemoprotein reductase] + 2 H2O + H(+). The catalysed reaction is 32-oxo-24,25-dihydrolanosterol + reduced [NADPH--hemoprotein reductase] + O2 = 4,4-dimethyl-8,14-cholestadien-3beta-ol + formate + oxidized [NADPH--hemoprotein reductase] + H2O + 2 H(+). The protein operates within steroid biosynthesis; zymosterol biosynthesis; zymosterol from lanosterol: step 1/6. With respect to regulation, inhibited by azalanstat. Inhibited by azole antifungal agents ketoconazole, itraconazole and fluconazole. Its function is as follows. Sterol 14alpha-demethylase that plays a critical role in the cholesterol biosynthesis pathway, being cholesterol the major sterol component in mammalian membranes as well as a precursor for bile acid and steroid hormone synthesis. Cytochrome P450 monooxygenase that catalyzes the three-step oxidative removal of the 14alpha-methyl group (C-32) of sterols such as lanosterol (lanosta-8,24-dien-3beta-ol) and 24,25-dihydrolanosterol (DHL) in the form of formate, and converts the sterols to 4,4-dimethyl-5alpha-cholesta-8,14,24-trien-3beta-ol and 4,4-dimethyl-8,14-cholestadien-3beta-ol, respectively, which are intermediates of cholesterol biosynthesis. Can also demethylate substrates not intrinsic to mammals, such as eburicol (24-methylene-24,25-dihydrolanosterol), but at a lower rate than DHL. This Mus musculus (Mouse) protein is Lanosterol 14-alpha demethylase.